Consider the following 475-residue polypeptide: Isocitrate dehydrogenase [NADP] (475 aa).

T104 contributes to the NADP(+) binding site. Residues S113, N115, R119, R129, and R153 each contribute to the D-threo-isocitrate site. A Mg(2+)-binding site is contributed by D362. NADP(+) is bound by residues H394 to H400, N407, Y446, and R450.

This sequence belongs to the isocitrate and isopropylmalate dehydrogenases family. Homodimer. Mg(2+) is required as a cofactor. Mn(2+) serves as cofactor.

The protein resides in the cytoplasm. It carries out the reaction D-threo-isocitrate + NADP(+) = 2-oxoglutarate + CO2 + NADPH. Inhibited non-competitively by ADP and 2-oxoglutarate, with respect to isocitrate and in a competitive manner by NADPH. Its function is as follows. Catalyzes the oxidative decarboxylation of isocitrate to 2-oxoglutarate and carbon dioxide with the concomitant reduction of NADP(+). Is specific for NADP(+), cannot use NAD(+). This chain is Isocitrate dehydrogenase [NADP], found in Synechocystis sp. (strain ATCC 27184 / PCC 6803 / Kazusa).